A 285-amino-acid chain; its full sequence is Phosphatidylserine decarboxylase proenzyme (285 aa).

Residues Asp-96, His-152, and Ser-250 each act as charge relay system; for autoendoproteolytic cleavage activity in the active site. The active-site Schiff-base intermediate with substrate; via pyruvic acid; for decarboxylase activity is the Ser-250. A Pyruvic acid (Ser); by autocatalysis modification is found at Ser-250.

Belongs to the phosphatidylserine decarboxylase family. PSD-B subfamily. Prokaryotic type I sub-subfamily. As to quaternary structure, heterodimer of a large membrane-associated beta subunit and a small pyruvoyl-containing alpha subunit. Requires pyruvate as cofactor. Is synthesized initially as an inactive proenzyme. Formation of the active enzyme involves a self-maturation process in which the active site pyruvoyl group is generated from an internal serine residue via an autocatalytic post-translational modification. Two non-identical subunits are generated from the proenzyme in this reaction, and the pyruvate is formed at the N-terminus of the alpha chain, which is derived from the carboxyl end of the proenzyme. The autoendoproteolytic cleavage occurs by a canonical serine protease mechanism, in which the side chain hydroxyl group of the serine supplies its oxygen atom to form the C-terminus of the beta chain, while the remainder of the serine residue undergoes an oxidative deamination to produce ammonia and the pyruvoyl prosthetic group on the alpha chain. During this reaction, the Ser that is part of the protease active site of the proenzyme becomes the pyruvoyl prosthetic group, which constitutes an essential element of the active site of the mature decarboxylase.

The protein localises to the cell membrane. It carries out the reaction a 1,2-diacyl-sn-glycero-3-phospho-L-serine + H(+) = a 1,2-diacyl-sn-glycero-3-phosphoethanolamine + CO2. It participates in phospholipid metabolism; phosphatidylethanolamine biosynthesis; phosphatidylethanolamine from CDP-diacylglycerol: step 2/2. In terms of biological role, catalyzes the formation of phosphatidylethanolamine (PtdEtn) from phosphatidylserine (PtdSer). The polypeptide is Phosphatidylserine decarboxylase proenzyme (Acinetobacter baylyi (strain ATCC 33305 / BD413 / ADP1)).